Reading from the N-terminus, the 422-residue chain is Electron transfer flavoprotein subunit alpha (422 aa).

A disordered region spans residues K61–S80. FAD contacts are provided by residues S329–R330, Q343–T347, G360–H367, and N381.

It belongs to the ETF alpha-subunit/FixB family. As to quaternary structure, heterodimer of an alpha and a beta subunit. FAD serves as cofactor.

Its function is as follows. Participates in the electron transfer process during N,N-dimethylglycine (DMG) degradation to sarcosine. In Chromohalobacter salexigens (strain ATCC BAA-138 / DSM 3043 / CIP 106854 / NCIMB 13768 / 1H11), this protein is Electron transfer flavoprotein subunit alpha.